The chain runs to 207 residues: V-type ATP synthase subunit D (207 aa).

This sequence belongs to the V-ATPase D subunit family.

Produces ATP from ADP in the presence of a proton gradient across the membrane. The chain is V-type ATP synthase subunit D from Streptococcus gordonii (strain Challis / ATCC 35105 / BCRC 15272 / CH1 / DL1 / V288).